Reading from the N-terminus, the 151-residue chain is Large ribosomal subunit protein uL13 (151 aa).

The tract at residues 126–151 (YPGPNHPHQAQKPEELTLNTIPNGDK) is disordered. The segment covering 142 to 151 (TLNTIPNGDK) has biased composition (polar residues).

This sequence belongs to the universal ribosomal protein uL13 family. As to quaternary structure, part of the 50S ribosomal subunit.

In terms of biological role, this protein is one of the early assembly proteins of the 50S ribosomal subunit, although it is not seen to bind rRNA by itself. It is important during the early stages of 50S assembly. The protein is Large ribosomal subunit protein uL13 of Crocosphaera subtropica (strain ATCC 51142 / BH68) (Cyanothece sp. (strain ATCC 51142)).